The following is a 220-amino-acid chain: tRNA (guanine-N(7)-)-methyltransferase (220 aa).

S-adenosyl-L-methionine-binding residues include glutamate 44, glutamate 69, asparagine 96, and aspartate 118. Residue aspartate 118 is part of the active site. Lysine 122 lines the substrate pocket. Residues 124-129 (RHEKRR) are interaction with RNA. Residues aspartate 154 and 191-194 (TEYE) contribute to the substrate site.

It belongs to the class I-like SAM-binding methyltransferase superfamily. TrmB family.

The enzyme catalyses guanosine(46) in tRNA + S-adenosyl-L-methionine = N(7)-methylguanosine(46) in tRNA + S-adenosyl-L-homocysteine. Its pathway is tRNA modification; N(7)-methylguanine-tRNA biosynthesis. Functionally, catalyzes the formation of N(7)-methylguanine at position 46 (m7G46) in tRNA. This is tRNA (guanine-N(7)-)-methyltransferase from Geobacillus sp. (strain WCH70).